The chain runs to 154 residues: Transcriptional repressor NrdR (154 aa).

The tract at residues 1–22 is disordered; the sequence is MECPNCHKNASRVIDSRPSDEN. A zinc finger lies at 3–34; that stretch reads CPNCHKNASRVIDSRPSDENRAIRRRRECENC. In terms of domain architecture, ATP-cone spans 49 to 139; the sequence is LLVIKNDGTR…IYRQFKDVSG (91 aa).

This sequence belongs to the NrdR family. It depends on Zn(2+) as a cofactor.

In terms of biological role, negatively regulates transcription of bacterial ribonucleotide reductase nrd genes and operons by binding to NrdR-boxes. The sequence is that of Transcriptional repressor NrdR from Lactobacillus gasseri (strain ATCC 33323 / DSM 20243 / BCRC 14619 / CIP 102991 / JCM 1131 / KCTC 3163 / NCIMB 11718 / NCTC 13722 / AM63).